A 65-amino-acid chain; its full sequence is Large ribosomal subunit protein bL35 (65 aa).

This sequence belongs to the bacterial ribosomal protein bL35 family.

The sequence is that of Large ribosomal subunit protein bL35 from Edwardsiella ictaluri (strain 93-146).